A 445-amino-acid polypeptide reads, in one-letter code: Na(+)-translocating NADH-quinone reductase subunit A (445 aa).

Belongs to the NqrA family. Composed of six subunits; NqrA, NqrB, NqrC, NqrD, NqrE and NqrF.

It carries out the reaction a ubiquinone + n Na(+)(in) + NADH + H(+) = a ubiquinol + n Na(+)(out) + NAD(+). Its function is as follows. NQR complex catalyzes the reduction of ubiquinone-1 to ubiquinol by two successive reactions, coupled with the transport of Na(+) ions from the cytoplasm to the periplasm. NqrA to NqrE are probably involved in the second step, the conversion of ubisemiquinone to ubiquinol. This chain is Na(+)-translocating NADH-quinone reductase subunit A, found in Marinomonas sp. (strain MWYL1).